A 161-amino-acid polypeptide reads, in one-letter code: Large ribosomal subunit protein uL15 (161 aa).

A disordered region spans residues 1–43 (MKLSDIADNAGARKKRMRVGRGIGSGKGKTSGRGGKGQTARSG). Residues 21–37 (RGIGSGKGKTSGRGGKG) are compositionally biased toward gly residues.

The protein belongs to the universal ribosomal protein uL15 family. As to quaternary structure, part of the 50S ribosomal subunit.

In terms of biological role, binds to the 23S rRNA. The protein is Large ribosomal subunit protein uL15 of Bradyrhizobium sp. (strain ORS 278).